Consider the following 158-residue polypeptide: MTLKTIEGTFIAPKGRYALVVGRFNSFVVESLVSGAVDALVRHGVSESDITIIRAPGAFEIPLVAQKVAQQGAYDAIIALGAVIRGGTPHFEYVAGECTKGLAQVSMEFGVPVAFGVLTVDSIEQAIERSGTKAGNKGAEAALSALEMVSLLAQLEAK.

Residues phenylalanine 24, alanine 58–glutamate 60, and alanine 82–isoleucine 84 each bind 5-amino-6-(D-ribitylamino)uracil. Glycine 87–threonine 88 contacts (2S)-2-hydroxy-3-oxobutyl phosphate. Histidine 90 functions as the Proton donor in the catalytic mechanism. Residue phenylalanine 115 participates in 5-amino-6-(D-ribitylamino)uracil binding. Arginine 129 is a (2S)-2-hydroxy-3-oxobutyl phosphate binding site.

The protein belongs to the DMRL synthase family. As to quaternary structure, forms an icosahedral capsid composed of 60 subunits, arranged as a dodecamer of pentamers.

The enzyme catalyses (2S)-2-hydroxy-3-oxobutyl phosphate + 5-amino-6-(D-ribitylamino)uracil = 6,7-dimethyl-8-(1-D-ribityl)lumazine + phosphate + 2 H2O + H(+). It functions in the pathway cofactor biosynthesis; riboflavin biosynthesis; riboflavin from 2-hydroxy-3-oxobutyl phosphate and 5-amino-6-(D-ribitylamino)uracil: step 1/2. Functionally, catalyzes the formation of 6,7-dimethyl-8-ribityllumazine by condensation of 5-amino-6-(D-ribitylamino)uracil with 3,4-dihydroxy-2-butanone 4-phosphate. This is the penultimate step in the biosynthesis of riboflavin. The chain is 6,7-dimethyl-8-ribityllumazine synthase from Pseudomonas putida (strain GB-1).